The following is a 103-amino-acid chain: Ribonuclease VapC14 (103 aa).

Positions 3–74 (YVLDTNVVSA…WFDDKVLRIF (72 aa)) constitute a PINc domain. Aspartate 6 lines the Mg(2+) pocket.

It belongs to the PINc/VapC protein family. Requires Mg(2+) as cofactor.

Its function is as follows. Toxic component of a type II toxin-antitoxin (TA) system. An RNase. The cognate antitoxin is VapB14. The protein is Ribonuclease VapC14 (vapC14) of Mycobacterium tuberculosis (strain CDC 1551 / Oshkosh).